The primary structure comprises 267 residues: NAD kinase (267 aa).

Catalysis depends on D45, which acts as the Proton acceptor. NAD(+) is bound by residues 45 to 46 (DG), 121 to 122 (NE), R147, D149, 160 to 165 (TAYSKS), and A184.

This sequence belongs to the NAD kinase family. Requires a divalent metal cation as cofactor.

The protein localises to the cytoplasm. The enzyme catalyses NAD(+) + ATP = ADP + NADP(+) + H(+). Its function is as follows. Involved in the regulation of the intracellular balance of NAD and NADP, and is a key enzyme in the biosynthesis of NADP. Catalyzes specifically the phosphorylation on 2'-hydroxyl of the adenosine moiety of NAD to yield NADP. This Lactobacillus acidophilus (strain ATCC 700396 / NCK56 / N2 / NCFM) protein is NAD kinase.